The primary structure comprises 63 residues: Small ribosomal subunit protein bS21 (63 aa).

Positions Lys40–Ala52 are enriched in basic and acidic residues. Positions Lys40–Tyr63 are disordered. Residues Arg53–Tyr63 are compositionally biased toward basic residues.

This sequence belongs to the bacterial ribosomal protein bS21 family.

The polypeptide is Small ribosomal subunit protein bS21 (Limosilactobacillus reuteri (strain DSM 20016) (Lactobacillus reuteri)).